A 219-amino-acid polypeptide reads, in one-letter code: Protein P25 (219 aa).

Positions lysine 57–arginine 62 match the Nuclear localization signal motif. The segment at aspartate 103 to phenylalanine 146 is transcription activation. Residues valine 169–valine 178 carry the Nuclear export signal motif.

The protein belongs to the benyvirus P25 protein family. Homooligomer.

The protein resides in the host cytoplasm. The protein localises to the host nucleus. Functionally, pathogenicity factor implicated in symptom exacerbation. Might function as transcription activator (Potential). This Beet necrotic yellow vein virus (isolate Japan/S) (BNYVV) protein is Protein P25.